The following is a 489-amino-acid chain: MRPPALLALFSCSAAFALMSEEIKEKVTPSQDLRQSSLPGRHDIDLKEIVFVIQSQSNSFHAKRAEQLKKNILKQAANLTQDLPRVLLLHQLAKQEGAWTILPLLPHFSVTYSKNSAWIFFCEEETRLQIPRLLDTLRRYDPSKEWFLGKALYDEESTIIHHYAFSENPTVFKYPDFAAGWALSIPLVNKLAKRLKSEALKSDFTIDLKHEIALYIWDKGGGPALTPVPEFCTEDVDPRCVTTFHSFLPLCGVPVKKEEIFVAVKTCKKFHADRIPIVKKTWAAQASLIEYYSDYAETAIPTVDLGIPNTDRGHCGKTFAILEKFLNHSHNKISWLVIVDDDTLISISRLRHLLSCYDSSDPVFLGERYGYGLGTGGYSYVTGGGGMVFSREAIRRLLVSSCRCYSNDAPDDMVLGMCFSGLGVPVTHSPLFHQARPVDYPKDYLAHQIPVSFHKHWHIDPVKVYLTWLAPSEEDQATQETQKDPREEL.

Met1 is a topological domain (cytoplasmic). The chain crosses the membrane as a helical; Signal-anchor for type II membrane protein span at residues 2–22; that stretch reads RPPALLALFSCSAAFALMSEE. Over 23-489 the chain is Lumenal; sequence IKEKVTPSQD…ETQKDPREEL (467 aa). Asn78 is a glycosylation site (N-linked (GlcNAc...) asparagine). The Prevents secretion from ER motif lies at 486 to 489; sequence REEL.

It belongs to the glycosyltransferase 31 family.

It localises to the endoplasmic reticulum membrane. It participates in protein modification; protein glycosylation. Functionally, O-glucosyltransferase that transfers glucose toward fucose with a beta-1,3 linkage. Specifically glucosylates O-linked fucosylglycan on TSP type-1 domains of proteins, thereby contributing to elongation of O-fucosylglycan. This chain is Beta-1,3-glucosyltransferase, found in Mus musculus (Mouse).